The chain runs to 121 residues: Large ribosomal subunit protein uL24 (121 aa).

This sequence belongs to the universal ribosomal protein uL24 family. Part of the 50S ribosomal subunit.

One of two assembly initiator proteins, it binds directly to the 5'-end of the 23S rRNA, where it nucleates assembly of the 50S subunit. Its function is as follows. Located at the polypeptide exit tunnel on the outside of the subunit. The sequence is that of Large ribosomal subunit protein uL24 from Pyrococcus furiosus (strain ATCC 43587 / DSM 3638 / JCM 8422 / Vc1).